Reading from the N-terminus, the 342-residue chain is Protein FinQ (342 aa).

Residues 208 to 227 (RDREFNLLNAQISMVLYICS) constitute a DNA-binding region (H-T-H motif).

In terms of biological role, transcriptional inhibitor of the F plasmid transfer genes. FinQ may regulate a gene or genes encoded on the IncI plasmids, and coincidentally may inhibit F transfer when coresident. The polypeptide is Protein FinQ (finQ) (Escherichia coli).